The sequence spans 241 residues: Terpene cyclase terB (241 aa).

A run of 5 helical transmembrane segments spans residues 19–39, 48–68, 75–95, 114–134, and 137–157; these read LADT…GAMI, YCMG…YTLV, VELA…FAAT, LIFL…AAEI, and ALAY…GGVC. N-linked (GlcNAc...) asparagine glycosylation is present at N163. 2 consecutive transmembrane segments (helical) span residues 169-189 and 198-218; these read SVTL…FAFL and FAWL…LADI.

The protein belongs to the paxB family.

It is found in the membrane. It participates in secondary metabolite biosynthesis. In terms of biological role, terpene cyclase; part of the gene cluster that mediates the biosynthesis of terpendoles, indole-diterpene (IDT) mycotoxins including terpendole I, terpendole K, terpendole C, as well as the kinesin Eg5 inhibitor terpendole E. Terpendoles biosynthesis begins with the synthesis of geranylgeranyl diphosphate (GGPP) by a yet unidentified GGPP synthase. Condensation of indole-3-glycerol phosphate with GGPP by the prenyltransferase terC then forms 3-geranylgeranylindole (3-GGI), followed by epoxidation and cyclization of this intermediate (by the FAD-dependent monooxygeanse terM and the terpene cyclase terB) to form paspaline. The cytochrome monooxygenase terQ then hydroxylates paspalline at C-11 to yield terpendole E. The cytochrome monooxygenase terP converts terpendole E to 13-desoxyterpendole I, and terQ converts 13-desoxyterpendole I into terpendole I. TerF and terK are required for conversion of terpendole I to terpendole C which is further converted to terpendole K. This Tolypocladium album (Soil fungus) protein is Terpene cyclase terB.